The primary structure comprises 1052 residues: MRCLISYLFHSFLIFLKFIRSDVTALTLQEKRKKSRLTGILMKSMANKKNHQQKKSTDGSTMNGNNATATAAATTQNSSQIGQNSNSSHSVTNDNTSSNNASTSTSSITSTTTTTTTVPSSQQSQSQNQYSHQRLSSTSSTSQQTGISKFPAKKAGHNELEKTSNTANSQSGAFKGTTNKDRPKEKEKNTHSGNRQSQVNHNHHHSNHVSGNQQNRKNKNRDHSNQSYRGGYTHNHNNYHSLENAKSSGFLSNSSLSSAGQISASSAPPVSTTPTAIPIFQESKIVQTDPPVEEAKKKKEKPKIKRDEEPMPYKSTDPKNMDSVMAFKEHDEWDKVEFMCELVSFLSPTDLRLLGNCIEGSVRCYNNQMRPVEKTSNCSDPTAGLPQFVCSPPPPPQQVYYFPGIADAALYQTRNAVNSVFVQQHPPGLPPLLGGMQNIMYPPDANFHHSTSCTTPSSSVSVANKDVNNVPVVLSSSVNGISNNIPSDRQQLDSKPNTARGSSGNINQSNTTSPEPEPGSNHISTTAANPAHPTSVTVPQSVPPVPQEPELFLKSVLDLTSYIYTLMAVCSSTNRKSAAKISDYVQNVILREKSQILERIPDELDKITVLQEIGKIVAAMTHHPAITLDDKMKYAALRDGLRAQIETLFRQYYTTQKQLEQSNLVVPSSQAVGDENDTDSDHESEEEFEPLSGVMGSRFESNPVQPSPSVPGTFFIIRFIGRQIEKNDNLFSLEIHWSDGDRTFAQRSRDQLKALQHRLLDEFGQQRSEKYLHQGCTTSYSSFDDDNKKLSASTSTMETFAPNGERIVPRLARDATPAQYVQYINELSDLPARMMLSAVICEEFNGTRAKTEDLLQETREASDGLIYSRWKNPRAKSPVRYFKRNATGSIDPIELPVNMQPFLYSNIPQTQVQTLFPSCSNCGGPHAPKHCEKQTLLSKKGDHRTRSDGEGSQQNGGTSSSNSYAPIHANLPHAVYIENPQAMLGSNHFNHHQQQHIIQNTIFHNGGQFRANGTYEPQIPIAYYHAQGTVQNSNNTGGVNGNSGGGNQNSNF.

The N-terminal stretch at 1–25 (MRCLISYLFHSFLIFLKFIRSDVTA) is a signal peptide. Disordered regions lie at residues 41–320 (LMKS…DPKN), 478–543 (VNGI…QSVP), 667–689 (PSSQ…EEFE), 933–965 (KQTL…NSYA), and 1033–1052 (SNNT…NSNF). Over residues 67–145 (ATATAAATTQ…SSTSSTSQQT (79 aa)) the composition is skewed to low complexity. Residues 163 to 172 (TSNTANSQSG) show a composition bias toward polar residues. Over residues 178-190 (TNKDRPKEKEKNT) the composition is skewed to basic and acidic residues. Low complexity predominate over residues 244–279 (NAKSSGFLSNSSLSSAGQISASSAPPVSTTPTAIPI). Positions 305 to 320 (KRDEEPMPYKSTDPKN) are enriched in basic and acidic residues. Positions 424 to 732 (QHPPGLPPLL…QIEKNDNLFS (309 aa)) are gld-4 binding. Residues 480-514 (GISNNIPSDRQQLDSKPNTARGSSGNINQSNTTSP) are compositionally biased toward polar residues. Residues 674–689 (DENDTDSDHESEEEFE) show a composition bias toward acidic residues. The tract at residues 892–1052 (PIELPVNMQP…SGGGNQNSNF (161 aa)) is gld-3 binding. Over residues 950–963 (EGSQQNGGTSSSNS) the composition is skewed to low complexity. A compositionally biased stretch (gly residues) spans 1038–1052 (GVNGNSGGGNQNSNF).

Isoform C interacts (via C-terminus) with gld-3 isoform A (via C-terminus) in an RNA-independent manner. Isoform C interacts with gld-4. As to expression, expressed in the germline (at protein level). In the early embryo is expressed in all cells, then becomes gradually restricted to the germ cell lineage and enriches in P granules (at protein level). In adult hermaphrodites, is expressed in the mitotic region, accumulates during early stages of meiotic prophase I and is slightly less abundant in maturing oocytes (at protein level).

Its subcellular location is the cytoplasm. The protein localises to the cytoplasmic granule. Required maternally for germline survival by forming a maternal complex with gld-3. During hermaphrodite development forms a complex with gld-3 which promotes the sperm/oocyte switch freeing the translational repressor fbf to turn off sperm promoting factors. Required for proper oocyte differentiation and oogenic meiotic arrest. Stimulates the enzymatic activity of gld-4 and together they prevent gld-1 mRNA degradation. The polypeptide is Germline survival defective-1 (Caenorhabditis elegans).